The sequence spans 512 residues: Protein male-specific lethal-3 (512 aa).

A Chromo domain is found at 11 to 90 (FHKGEIVLCY…QLQRELAEAA (80 aa)). A disordered region spans residues 98–175 (YSYKGTPDKP…DGRLKGNRGR (78 aa)). Residues 149–169 (RTRDNSGGKRKEKPPSGDGRL) are compositionally biased toward basic and acidic residues. The MRG domain maps to 196–500 (QEDRIMMRVS…STALPQEDLQ (305 aa)).

Component of the male-specific lethal (MSL) histone acetyltransferase complex, composed of mof, mle, msl-1, msl-2 and msl-3 proteins, as well as roX1 and roX2 non-coding RNAs. Component of a maternal MSL subcomplex composed of mof, msl-1 and msl-3. In terms of processing, ubiquitinated by msl-2.

Its subcellular location is the nucleus. The protein localises to the chromosome. Component of the male-specific lethal (MSL) histone acetyltransferase complex, a multiprotein complex essential for elevating transcription of the single X chromosome in the male (X chromosome dosage compensation). The MSL complex specifically associates with the single X chromosome in males and mediates formation of H4K16ac, promoting a two-fold activation of X chromosome. Acts as a histone reader that specifically recognizes and binds histone H3 trimethylated at 'Lys-36' (H3K36me3) and histone H4 monomethylated at 'Lys-20' (H4K20me1). Within the MSL complex, mediates the spreading of the MSL complex from initiation sites on the male X chromosome to flanking chromatin. Following initial recruitment of the MSL complex to male X chromosome by msl-2, msl-3 binds H3K36me3 and promotes spreading of the MSL complex in cis. In addition to its role in dosage compensation in males, promotes germline stem cell differentiation in females: recognizes and binds H3K36me3, promoting recruitment of the ATAC complex and transcription of genes, such as RpS19b. In Drosophila melanogaster (Fruit fly), this protein is Protein male-specific lethal-3.